Reading from the N-terminus, the 643-residue chain is 3D-(3,5/4)-trihydroxycyclohexane-1,2-dione hydrolase (643 aa).

E65 is a binding site for thiamine diphosphate. A thiamine pyrophosphate binding region spans residues 441-521; the sequence is SLPGDLQRMW…VNVLLFDNCG (81 aa). The Mg(2+) site is built by D492 and N519.

This sequence belongs to the TPP enzyme family. Mg(2+) serves as cofactor. The cofactor is thiamine diphosphate.

The enzyme catalyses 3D-3,5/4-trihydroxycyclohexane-1,2-dione + H2O = 5-deoxy-D-glucuronate + H(+). The protein operates within polyol metabolism; myo-inositol degradation into acetyl-CoA; acetyl-CoA from myo-inositol: step 3/7. Its function is as follows. Involved in the cleavage of the C1-C2 bond of 3D-(3,5/4)-trihydroxycyclohexane-1,2-dione (THcHDO) to yield 5-deoxy-glucuronate (5DG). This is 3D-(3,5/4)-trihydroxycyclohexane-1,2-dione hydrolase from Clostridium botulinum (strain Eklund 17B / Type B).